A 202-amino-acid chain; its full sequence is MQSLYVEGNSRMHRLSPRAKLLSLTAFAILLFISHNLLLLSGAVLVAAVLYGTVGLPIGEALLRLRPIFLTIAVVALFNLIFNPWQAALVPVLRLTALMLLAASVTATTTITEFIDEVTALARPLERTGRVQADDIGLALGLVLRFVPEIVNRYQAIREAHKARGLKVRPTSLLAPLIILTLKDADNVAAAIDARRIRRHGS.

Helical transmembrane passes span 21-40 (LLSLTAFAILLFISHNLLLL), 44-63 (VLVAAVLYGTVGLPIGEALL), and 68-90 (IFLTIAVVALFNLIFNPWQAALV).

Belongs to the CbiQ family. Part of a biotin transporter complex composed of BioM, BioN and BioY.

The protein localises to the cell inner membrane. Functionally, involved in biotin uptake. The protein is Energy-coupling factor transporter transmembrane protein BioN (bioN) of Rhizobium etli (strain ATCC 51251 / DSM 11541 / JCM 21823 / NBRC 15573 / CFN 42).